The sequence spans 371 residues: Lipoyl synthase, mitochondrial (371 aa).

A mitochondrion-targeting transit peptide spans 1–24 (MLSRFKCSRLQLQKRAISVTKATT). Polar residues predominate over residues 20–29 (TKATTTTASQ). The tract at residues 20 to 42 (TKATTTTASQPKRRRTTTFSDAL) is disordered. Residues cysteine 107, cysteine 112, cysteine 118, cysteine 138, cysteine 142, cysteine 145, and serine 353 each contribute to the [4Fe-4S] cluster site. Residues 121–342 (GGDSSKATAT…RDKALELGFL (222 aa)) form the Radical SAM core domain.

The protein belongs to the radical SAM superfamily. Lipoyl synthase family. Requires [4Fe-4S] cluster as cofactor.

The protein resides in the mitochondrion. It carries out the reaction [[Fe-S] cluster scaffold protein carrying a second [4Fe-4S](2+) cluster] + N(6)-octanoyl-L-lysyl-[protein] + 2 oxidized [2Fe-2S]-[ferredoxin] + 2 S-adenosyl-L-methionine + 4 H(+) = [[Fe-S] cluster scaffold protein] + N(6)-[(R)-dihydrolipoyl]-L-lysyl-[protein] + 4 Fe(3+) + 2 hydrogen sulfide + 2 5'-deoxyadenosine + 2 L-methionine + 2 reduced [2Fe-2S]-[ferredoxin]. The protein operates within protein modification; protein lipoylation via endogenous pathway; protein N(6)-(lipoyl)lysine from octanoyl-[acyl-carrier-protein]: step 2/2. Its function is as follows. Catalyzes the radical-mediated insertion of two sulfur atoms into the C-6 and C-8 positions of the octanoyl moiety bound to the lipoyl domains of lipoate-dependent enzymes, thereby converting the octanoylated domains into lipoylated derivatives. The sequence is that of Lipoyl synthase, mitochondrial from Lachancea thermotolerans (strain ATCC 56472 / CBS 6340 / NRRL Y-8284) (Yeast).